Consider the following 172-residue polypeptide: MFDAFTKVVAQADARGQFISASEIDALAAMVSDSNKRLDAVNRISSNASTIVASAARQLFAQQPSLIAPGGNAYTSRRMAACLRDMEIILRYVTYASFAGDASVLEDRCLNGLRETYLALGTPGASVAAGVNLMKESALAIVNDRAGISAGDCASLSSEIGTYFDRAAAAVA.

At Asn72 the chain carries N4-methylasparagine. Cys82 is a binding site for (2R,3E)-phycocyanobilin. Cys153 is a binding site for (2R,3E)-phycoerythrobilin.

It belongs to the phycobiliprotein family. Heterodimer of an alpha and a beta subunit, which further assembles into trimers and the trimers into hexamers. Contains two covalently linked bilin chromophores.

It is found in the cellular thylakoid membrane. Light-harvesting photosynthetic bile pigment-protein from the phycobiliprotein complex (phycobilisome, PBS). Phycocyanin is the major phycobiliprotein in the PBS rod. This Synechococcus sp. (strain WH7803) protein is R-phycocyanin beta subunit (rpcB).